Here is a 241-residue protein sequence, read N- to C-terminus: UDP-2,3-diacylglucosamine hydrolase (241 aa).

Aspartate 9, histidine 11, aspartate 42, asparagine 79, and histidine 114 together coordinate Mn(2+). A substrate-binding site is contributed by 79-80; the sequence is NR. Aspartate 122, serine 160, asparagine 164, lysine 167, and histidine 195 together coordinate substrate. Residues histidine 195 and histidine 197 each contribute to the Mn(2+) site.

This sequence belongs to the LpxH family. Requires Mn(2+) as cofactor.

It localises to the cell inner membrane. The enzyme catalyses UDP-2-N,3-O-bis[(3R)-3-hydroxytetradecanoyl]-alpha-D-glucosamine + H2O = 2-N,3-O-bis[(3R)-3-hydroxytetradecanoyl]-alpha-D-glucosaminyl 1-phosphate + UMP + 2 H(+). Its pathway is glycolipid biosynthesis; lipid IV(A) biosynthesis; lipid IV(A) from (3R)-3-hydroxytetradecanoyl-[acyl-carrier-protein] and UDP-N-acetyl-alpha-D-glucosamine: step 4/6. Hydrolyzes the pyrophosphate bond of UDP-2,3-diacylglucosamine to yield 2,3-diacylglucosamine 1-phosphate (lipid X) and UMP by catalyzing the attack of water at the alpha-P atom. Involved in the biosynthesis of lipid A, a phosphorylated glycolipid that anchors the lipopolysaccharide to the outer membrane of the cell. The protein is UDP-2,3-diacylglucosamine hydrolase of Shewanella frigidimarina (strain NCIMB 400).